The sequence spans 383 residues: Putative glutamate--cysteine ligase 2-2 (383 aa).

The protein belongs to the glutamate--cysteine ligase type 2 family. YbdK subfamily.

The catalysed reaction is L-cysteine + L-glutamate + ATP = gamma-L-glutamyl-L-cysteine + ADP + phosphate + H(+). ATP-dependent carboxylate-amine ligase which exhibits weak glutamate--cysteine ligase activity. This chain is Putative glutamate--cysteine ligase 2-2, found in Paenarthrobacter aurescens (strain TC1).